A 388-amino-acid polypeptide reads, in one-letter code: Protein-glutamate methylesterase/protein-glutamine glutaminase (388 aa).

A Response regulatory domain is found at 20 to 138; sequence RVMVVDDSVV…ESAGAEVFRH (119 aa). Asp-71 is subject to 4-aspartylphosphate. The CheB-type methylesterase domain occupies 193–386; it reads PTAPRVLLIG…PKLVRLFSGD (194 aa). Catalysis depends on residues Ser-204, His-232, and Asp-328.

Belongs to the CheB family. Post-translationally, phosphorylated by CheA. Phosphorylation of the N-terminal regulatory domain activates the methylesterase activity.

Its subcellular location is the cytoplasm. It catalyses the reaction [protein]-L-glutamate 5-O-methyl ester + H2O = L-glutamyl-[protein] + methanol + H(+). It carries out the reaction L-glutaminyl-[protein] + H2O = L-glutamyl-[protein] + NH4(+). Its function is as follows. Involved in chemotaxis. Part of a chemotaxis signal transduction system that modulates chemotaxis in response to various stimuli. Catalyzes the demethylation of specific methylglutamate residues introduced into the chemoreceptors (methyl-accepting chemotaxis proteins or MCP) by CheR. Also mediates the irreversible deamidation of specific glutamine residues to glutamic acid. The chain is Protein-glutamate methylesterase/protein-glutamine glutaminase from Rhodopseudomonas palustris (strain HaA2).